The chain runs to 250 residues: Lymphotoxin-beta (250 aa).

The Cytoplasmic portion of the chain corresponds to 1 to 26; that stretch reads MGAPGLETRAGGPNGKSYLLLASVGA. The chain crosses the membrane as a helical; Signal-anchor for type II membrane protein span at residues 27–47; it reads AVLGTLLLSVPITVLTVLALM. Topologically, residues 48–250 are extracellular; sequence PQEQGGQVAD…KTFFGAVMVG (203 aa). One can recognise a THD domain in the interval 87–249; sequence PAAHLIGIAK…GKTFFGAVMV (163 aa). N-linked (GlcNAc...) asparagine glycosylation is present at asparagine 228.

This sequence belongs to the tumor necrosis factor family. Heterotrimer of either two LTB and one LTA subunits or (less prevalent) two LTA and one LTB subunits.

It is found in the membrane. Functionally, cytokine that binds to LTBR/TNFRSF3. May play a specific role in immune response regulation. Provides the membrane anchor for the attachment of the heterotrimeric complex to the cell surface. This is Lymphotoxin-beta (LTB) from Notamacropus eugenii (Tammar wallaby).